Reading from the N-terminus, the 292-residue chain is MKNVVLETNLKGVKLLRRGKVRDIYEIEDYLLIVATDRVSAFDVVLPTGIPEKGKILTQISLFWFDKVKDIVENHLVSANADEFPEPLPAYKEILEGRSMLVKKAKPLPVECIVRGYLSGSGWKDYQKTGMICGIKLPEGLVESAKLPEPVFTPSTKAEQGHDINISFEETIQILGEETAQKVKELSLSIYKKAAQIAEKKGIIIADTKMEFGFYNGKLILIDELLTPDSSRFWSLENYRIGYPQDSYDKQIVRDYLLSIKWDKKPPAPQLPEDIVNKTAERYKEIFRILTS.

This sequence belongs to the SAICAR synthetase family.

It catalyses the reaction 5-amino-1-(5-phospho-D-ribosyl)imidazole-4-carboxylate + L-aspartate + ATP = (2S)-2-[5-amino-1-(5-phospho-beta-D-ribosyl)imidazole-4-carboxamido]succinate + ADP + phosphate + 2 H(+). Its pathway is purine metabolism; IMP biosynthesis via de novo pathway; 5-amino-1-(5-phospho-D-ribosyl)imidazole-4-carboxamide from 5-amino-1-(5-phospho-D-ribosyl)imidazole-4-carboxylate: step 1/2. In Thermodesulfovibrio yellowstonii (strain ATCC 51303 / DSM 11347 / YP87), this protein is Phosphoribosylaminoimidazole-succinocarboxamide synthase.